The primary structure comprises 506 residues: Maturase K (506 aa).

Belongs to the intron maturase 2 family. MatK subfamily.

It is found in the plastid. The protein localises to the chloroplast. Functionally, usually encoded in the trnK tRNA gene intron. Probably assists in splicing its own and other chloroplast group II introns. This Artanema fimbriatum protein is Maturase K.